The sequence spans 1011 residues: Liprin-beta-1 (1011 aa).

Ser-37 bears the Phosphoserine mark. Thr-39 is modified (phosphothreonine). Ser-40 is modified (phosphoserine). Residues 156-405 (QQELLSRTSL…VPEEFHTTIL (250 aa)) adopt a coiled-coil conformation. Lys-322 is modified (N6-acetyllysine). Disordered regions lie at residues 420–439 (ETSE…EEND) and 463–634 (KSSS…RDLG). Ser-434 and Ser-466 each carry phosphoserine. Over residues 470-492 (LKKETSDGEKETIQKTSEDRAPA) the composition is skewed to basic and acidic residues. Residue Lys-471 forms a Glycyl lysine isopeptide (Lys-Gly) (interchain with G-Cter in SUMO2) linkage. Phosphoserine is present on residues Ser-523 and Ser-540. Basic and acidic residues predominate over residues 546 to 556 (ETEKETAEHLD). The residue at position 579 (Ser-579) is a Phosphoserine. Residues 584–598 (KKSRGIMKLFGKLRR) show a composition bias toward basic residues. Residues Ser-601 and Ser-636 each carry the phosphoserine modification. 2 SAM domains span residues 647 to 711 (WTKE…LGSE) and 719 to 782 (LDFN…LRIN). Position 794 is a phosphoserine (Ser-794). In terms of domain architecture, SAM 3 spans 804–876 (VQKWTNHRVM…ATHFNLLIGA (73 aa)). A phosphoserine mark is found at Ser-999, Ser-1001, and Ser-1003. At Thr-1005 the chain carries Phosphothreonine.

It belongs to the liprin family. Liprin-beta subfamily. As to quaternary structure, forms homodimers and heterodimers. Interacts with S100A4 in a Ca(2+)-dependent mode. Part of a cortical microtubule stabilization complex (CMSC) composed of KANK1, PPFIA1, PPFIBP1, ERC1/ELKS, PHLDB2/LL5beta, CLASPs, KIF21A and possibly additional interactors; within CMSCs KANK1 and PHLDB2/LL5beta seem to be the core components for recruiting microtubule-binding proteins KIF21A and CLASPs, whereas PPFIA1, PPFIBP1 and ERC1/ELKS serve as scaffolds for protein clustering. Interacts with KANK1 (via CC1 domain, residues 244-339). In terms of tissue distribution, widely expressed. Absent in liver.

The protein resides in the cytoplasm. Its subcellular location is the cell cortex. Its function is as follows. May regulate the disassembly of focal adhesions. Did not bind receptor-like tyrosine phosphatases type 2A. This is Liprin-beta-1 (PPFIBP1) from Homo sapiens (Human).